Consider the following 444-residue polypeptide: Exodeoxyribonuclease 7 large subunit (444 aa).

Belongs to the XseA family. In terms of assembly, heterooligomer composed of large and small subunits.

The protein localises to the cytoplasm. It carries out the reaction Exonucleolytic cleavage in either 5'- to 3'- or 3'- to 5'-direction to yield nucleoside 5'-phosphates.. In terms of biological role, bidirectionally degrades single-stranded DNA into large acid-insoluble oligonucleotides, which are then degraded further into small acid-soluble oligonucleotides. The sequence is that of Exodeoxyribonuclease 7 large subunit from Hahella chejuensis (strain KCTC 2396).